Here is a 126-residue protein sequence, read N- to C-terminus: Protein ApaG (126 aa).

Residues 2-126 (SALDTSIRVE…FRLTTPGLLH (125 aa)) form the ApaG domain.

This Shewanella baltica (strain OS195) protein is Protein ApaG.